Consider the following 170-residue polypeptide: Peptide deformylase (170 aa).

Fe cation contacts are provided by C92 and H134. The active site involves E135. H138 contacts Fe cation.

This sequence belongs to the polypeptide deformylase family. It depends on Fe(2+) as a cofactor.

The enzyme catalyses N-terminal N-formyl-L-methionyl-[peptide] + H2O = N-terminal L-methionyl-[peptide] + formate. In terms of biological role, removes the formyl group from the N-terminal Met of newly synthesized proteins. Requires at least a dipeptide for an efficient rate of reaction. N-terminal L-methionine is a prerequisite for activity but the enzyme has broad specificity at other positions. The protein is Peptide deformylase of Chromohalobacter salexigens (strain ATCC BAA-138 / DSM 3043 / CIP 106854 / NCIMB 13768 / 1H11).